Reading from the N-terminus, the 523-residue chain is Bifunctional purine biosynthesis protein PurH (523 aa).

Positions 1–154 constitute an MGS-like domain; it reads MTATAGSNKR…KNHPSVAVVT (154 aa).

This sequence belongs to the PurH family.

It carries out the reaction (6R)-10-formyltetrahydrofolate + 5-amino-1-(5-phospho-beta-D-ribosyl)imidazole-4-carboxamide = 5-formamido-1-(5-phospho-D-ribosyl)imidazole-4-carboxamide + (6S)-5,6,7,8-tetrahydrofolate. It catalyses the reaction IMP + H2O = 5-formamido-1-(5-phospho-D-ribosyl)imidazole-4-carboxamide. It participates in purine metabolism; IMP biosynthesis via de novo pathway; 5-formamido-1-(5-phospho-D-ribosyl)imidazole-4-carboxamide from 5-amino-1-(5-phospho-D-ribosyl)imidazole-4-carboxamide (10-formyl THF route): step 1/1. Its pathway is purine metabolism; IMP biosynthesis via de novo pathway; IMP from 5-formamido-1-(5-phospho-D-ribosyl)imidazole-4-carboxamide: step 1/1. This is Bifunctional purine biosynthesis protein PurH from Streptomyces coelicolor (strain ATCC BAA-471 / A3(2) / M145).